The following is a 230-amino-acid chain: Cytochrome c oxidase subunit 2 (230 aa).

The Mitochondrial intermembrane portion of the chain corresponds to 1-26 (MATPAQLGLMDAASPVMEEMIYFHDH). Residues 27 to 48 (VMLVLILITCLIFYSMLVLISS) form a helical membrane-spanning segment. Residues 49-62 (KYIYRFLTDGHVIE) lie on the Mitochondrial matrix side of the membrane. A helical membrane pass occupies residues 63-82 (TVWTVIPAIILVVVALPSLK). Residues 83–230 (LLYLTDELDN…GWCDMMLDEE (148 aa)) are Mitochondrial intermembrane-facing. Cu cation-binding residues include His161, Cys196, Glu198, Cys200, His204, and Met207. A Mg(2+)-binding site is contributed by Glu198.

This sequence belongs to the cytochrome c oxidase subunit 2 family. Component of the cytochrome c oxidase (complex IV, CIV), a multisubunit enzyme composed of a catalytic core of 3 subunits and several supernumerary subunits. The complex exists as a monomer or a dimer and forms supercomplexes (SCs) in the inner mitochondrial membrane with ubiquinol-cytochrome c oxidoreductase (cytochrome b-c1 complex, complex III, CIII). It depends on Cu cation as a cofactor.

Its subcellular location is the mitochondrion inner membrane. The enzyme catalyses 4 Fe(II)-[cytochrome c] + O2 + 8 H(+)(in) = 4 Fe(III)-[cytochrome c] + 2 H2O + 4 H(+)(out). In terms of biological role, component of the cytochrome c oxidase, the last enzyme in the mitochondrial electron transport chain which drives oxidative phosphorylation. The respiratory chain contains 3 multisubunit complexes succinate dehydrogenase (complex II, CII), ubiquinol-cytochrome c oxidoreductase (cytochrome b-c1 complex, complex III, CIII) and cytochrome c oxidase (complex IV, CIV), that cooperate to transfer electrons derived from NADH and succinate to molecular oxygen, creating an electrochemical gradient over the inner membrane that drives transmembrane transport and the ATP synthase. Cytochrome c oxidase is the component of the respiratory chain that catalyzes the reduction of oxygen to water. Electrons originating from reduced cytochrome c in the intermembrane space (IMS) are transferred via the dinuclear copper A center (CU(A)) of subunit 2 and heme A of subunit 1 to the active site in subunit 1, a binuclear center (BNC) formed by heme A3 and copper B (CU(B)). The BNC reduces molecular oxygen to 2 water molecules using 4 electrons from cytochrome c in the IMS and 4 protons from the mitochondrial matrix. The polypeptide is Cytochrome c oxidase subunit 2 (COII) (Branchiostoma floridae (Florida lancelet)).